The sequence spans 200 residues: Glycerol-3-phosphate acyltransferase (200 aa).

A run of 4 helical transmembrane segments spans residues 4–24, 70–90, 110–130, and 158–178; these read ALLAVLGGYLLGSIPTGYWVG, ALGSALGSAWWVVLAALFAVI, LGILLAMAWPVALTTFGVWLL, and QPLPYLLFALAGGVYVIGAHR.

Belongs to the PlsY family. As to quaternary structure, probably interacts with PlsX.

It localises to the cell inner membrane. The enzyme catalyses an acyl phosphate + sn-glycerol 3-phosphate = a 1-acyl-sn-glycero-3-phosphate + phosphate. Its pathway is lipid metabolism; phospholipid metabolism. Its function is as follows. Catalyzes the transfer of an acyl group from acyl-phosphate (acyl-PO(4)) to glycerol-3-phosphate (G3P) to form lysophosphatidic acid (LPA). This enzyme utilizes acyl-phosphate as fatty acyl donor, but not acyl-CoA or acyl-ACP. This is Glycerol-3-phosphate acyltransferase from Synechococcus sp. (strain JA-2-3B'a(2-13)) (Cyanobacteria bacterium Yellowstone B-Prime).